The following is a 462-amino-acid chain: TNF receptor-associated factor family protein DDB_G0267754 (462 aa).

The segment at 24-62 adopts an RING-type; degenerate zinc-finger fold; that stretch reads CCVCECLLIEALQCRNGHVACKNCFIKIVKSKKECMTCR. Residues 104–127 form a disordered region; that stretch reads KNGNGNEGSSANEIEQPQQPQQQQ. 2 consecutive TRAF-type zinc fingers follow at residues 150–217 and 214–273; these read SHLK…SHTE and SHTE…NQLA. The 124-residue stretch at 326-449 folds into the MATH domain; sequence MFRGKWVISN…NDTLTINFSI (124 aa).

Belongs to the TNF receptor-associated factor family. A subfamily.

The protein localises to the cytoplasm. Probable adapter protein and signal transducer that links members of the tumor necrosis factor receptor family to different signaling pathways by association with the receptor cytoplasmic domain and kinases. The sequence is that of TNF receptor-associated factor family protein DDB_G0267754 from Dictyostelium discoideum (Social amoeba).